The sequence spans 1306 residues: MYFNNELSDLKDHLLRKLQYYTYSDVVRDRINFILWEFKFLDCFLYLKSFPFASECGMLHVSQKMIEIWKSQWNKLIYICMYDEEGSPWDAVVYWKELISQTKQEFRAQYSFPKSPLAANEVIDDDDDDNTHSPEFVMEVIGFFVGNINVLVKINDPCSCFFVPGLKEQIEQILKELKLLRFLVCFVSNKCIVPQYRCTTFYTRALIEASYIAMVAWLYLPIYGNGNQDLAPSEVSRLLSDFMEMKIKSIEPGISRNSIYIDVLQALKSTIPQAQKKHVEIPTHSLTVGLSDQMANLQEMLCLLRDNLIHLPILDLEFHLQDMDSVIVDAGLLIYSLYDIKGQMEDTSLDVINWALGFDLPRNIEPIKVMAYLVMQKAFHCNLPRIHGLGYVDFLLKNLNDFQDCYSDSLAFLKNQLQVIQTEFESLQPFLKVVAEEPHNKLKTLNEDCATQIIRKAYEVEYVVDACINKEALHWCLERWLLDIIEEITCIKAKIQEKNTVEDTMKTVIARTSSKLARTPRMKEEIVGFEDVIENLRKKLLSRTKGQDVISIHGMPGLGKTTLANRLYSDRSVVSQFDFCAQCCVSQVYSCKDLLLSLLRDAIGEESERRELPDNELADMLRKTLLPRRYLILVDDVWDNSAWDDLRGCFPDVNNRSRIILTTRHHEVAKYASVRSDPLHLRMFDEVESWKLLEKKVFGEQSCPPLLKNIGLRIAKMCGQLPLSIVLVAGILSEMEKDVECWEQVANNLGSHIHNDSRAIVDQSYHVLPCHLKSCFLYFGAFLEDRVIDISRLIRLWISEAFIKSSEGRSLEDIAEGYLENLIGRNLVMVTQRAISDGKVKACRLHDVLLDFCKERAAEENFLLWINRDQITKPSSCVYSHKQHAHLAFTEMHNLVEWSASCSFVGSVVLSNKYEPYFHDLSSLHDFSISRILPNFKFLKVLDLEHRVFIDFIPTELPYLRYFSALIDQNSIPSSISNLWNLETLILNRRSADSHNRVLLPSTVWDMVKLRHLHIPNFSPENKKALLKNSPNLDDLETLSYPYFARVKDAELMLRKTPNLRKLTCKVKCLEYLHQYHALNFPIRLEILKLYRSNAFKAIPFCISAPNLKYLKLSGFYLDSQYLSKTADHLKNLEVLKLYYVEFGDHREWKVSNGMFPQLKILKLEDVSLMKWIVADDAFPNLEQLVLRGCQDLMEIPSCFMDILSLQYIEVEDCNESVVKSAMNIQETQVEDYQNTNFKLVLIEKWPKFYKLFSQLSLPRGLVLHLGIESVSSDEKEKKLTVTGDVDADEVQLVVEKLRKCGMPGL.

2 coiled-coil regions span residues 407 to 428 (SDSL…ESLQ) and 520 to 542 (PRMK…KLLS). The NB-ARC domain occupies 521-808 (RMKEEIVGFE…SEAFIKSSEG (288 aa)). 554-561 (GMPGLGKT) contributes to the ATP binding site. LRR repeat units lie at residues 858 to 881 (AEEN…VYSH), 921 to 935 (LSSL…ILPN), 936 to 961 (FKFL…PYLR), 979 to 1007 (LWNL…VWDM), 1010 to 1035 (LRHL…NLDD), 1057 to 1081 (TPNL…ALNF), 1082 to 1106 (PIRL…ISAP), 1110 to 1129 (YLKL…TADH), 1130 to 1153 (LKNL…KVSN), 1156 to 1181 (FPQL…AFPN), and 1216 to 1240 (ESVV…NFKL). Residues 1240–1306 (LVLIEKWPKF…KLRKCGMPGL (67 aa)) form the HMA domain.

It belongs to the disease resistance NB-LRR family.

It localises to the cytoplasm. The protein resides in the membrane. Confers resistance to late blight (Phytophthora infestans) races carrying the avirulence gene Avr1. Resistance proteins guard the plant against pathogens that contain an appropriate avirulence protein via an indirect interaction with this avirulence protein. That triggers a defense system including the hypersensitive response, which restricts the pathogen growth. The chain is Putative late blight resistance protein homolog R1A-10 (R1A-10) from Solanum demissum (Wild potato).